The primary structure comprises 359 residues: MPLSRLIIQQFRNIKACDIALSPGFNFLIGPNGSGKTSVLEAIYLLGHGRSFKSALTGRVIQNECDQLFVHGRFLNSDQFELPIGINKQRDGTTEVKIGGQSGQKLAQLAQVLPLQLIHPEGFDLLTDGPKHRRAFIDWGVFHTEPAFYDAWGRFKRLNKQRNALLKSAKSYQELSYWDKEMARLAELISQWRADYVAQMQSKAEQLCQEFLPEFHIQLKYYRGWEKETPYQQILEENFERDQTLGYTVSGPNKADLRIKVNNTPVEDVLSRGQLKLMVCALRLAQGQHLTEKTGKQCVYLIDDFASELDSQRRKRLADCLKQTGAQVFVSSITENQISDMRDDSGRLFNVEQGVIEQG.

ATP is bound at residue 30 to 37 (GPNGSGKT).

Belongs to the RecF family.

Its subcellular location is the cytoplasm. Its function is as follows. The RecF protein is involved in DNA metabolism; it is required for DNA replication and normal SOS inducibility. RecF binds preferentially to single-stranded, linear DNA. It also seems to bind ATP. This chain is DNA replication and repair protein RecF, found in Vibrio vulnificus (strain YJ016).